The chain runs to 170 residues: Large ribosomal subunit protein uL16 (170 aa).

Belongs to the universal ribosomal protein uL16 family.

In Methanoculleus marisnigri (strain ATCC 35101 / DSM 1498 / JR1), this protein is Large ribosomal subunit protein uL16.